The following is a 225-amino-acid chain: MAAEFNNDWDDLLKDEFKKEYYLNLRKFLINEYKTQKIHPSMYDIFNALKFTPYKDVKVVILGQDPYHGPNQAHGFSFSVKPGVQTPPSLRNMFKELNSDLGCYIPNNGFLESWAKQGILLLNTVLTVREGQANSHKGKGWEIFTDRVIELLNKREEPIVFILWGRNAISKEALITNPIHKIIKSVHPSPLSATRGFFGSKPFSKTNDFLVSINKEPIDWQIPNI.

The active-site Proton acceptor is the Asp-65.

The protein belongs to the uracil-DNA glycosylase (UDG) superfamily. UNG family.

The protein localises to the cytoplasm. The enzyme catalyses Hydrolyzes single-stranded DNA or mismatched double-stranded DNA and polynucleotides, releasing free uracil.. Functionally, excises uracil residues from the DNA which can arise as a result of misincorporation of dUMP residues by DNA polymerase or due to deamination of cytosine. This is Uracil-DNA glycosylase from Clostridium perfringens (strain 13 / Type A).